The sequence spans 348 residues: Ethanol acetyltransferase 2 (348 aa).

Residues 1-19 (MIFNSLSIKRLSSTXTSLP) constitute a mitochondrion transit peptide. One can recognise an AB hydrolase-1 domain in the interval 49–305 (IIFLHGIYGY…VMKERPQEYI (257 aa)). Residues Ser121, Asp145, and His294 each act as charge relay system in the active site.

This sequence belongs to the AB hydrolase superfamily.

It is found in the mitochondrion. The catalysed reaction is ethanol + acetyl-CoA = ethyl acetate + CoA. It catalyses the reaction acetyl-CoA + H2O = acetate + CoA + H(+). The enzyme catalyses ethyl acetate + H2O = ethanol + acetate + H(+). Functionally, alcohol acetyltransferase that catalyzes the synthesis of ethyl acetate from ethanol and acetyl-CoA. Can also function as a thioesterase by hydrolyzing acetyl-CoA in the absence of ethanol, as well as esterase hydrolyzing ethyl acetate. This Hanseniaspora uvarum (Yeast) protein is Ethanol acetyltransferase 2 (EAT2).